A 513-amino-acid chain; its full sequence is Solute carrier family 2, facilitated glucose transporter member 10 (513 aa).

Over 1–6 the chain is Cytoplasmic; sequence MGCSVL. The chain crosses the membrane as a helical span at residues 7-27; sequence LLTITVSTLGGLVFGYELGII. Residues 28 to 46 lie on the Extracellular side of the membrane; sequence SGALPQLQTHFSLGCVQQE. Residues 47–67 form a helical membrane-spanning segment; that stretch reads AVVSALLIGSLFASIIGGWLI. The Cytoplasmic segment spans residues 68 to 80; that stretch reads DRHGRRTSILLSN. Residues 81–101 traverse the membrane as a helical segment; that stretch reads LLILAGSVILTTGTSFFALVI. At 102–104 the chain is on the extracellular side; the sequence is GRA. A helical transmembrane segment spans residues 105–125; that stretch reads VIGFAMTVSSMSCCIFVSEMV. The Cytoplasmic segment spans residues 126 to 130; sequence TPERR. A helical transmembrane segment spans residues 131–151; the sequence is GLMVTLYEVGITVGILIAYAV. Topologically, residues 152–164 are extracellular; that stretch reads NYIFNNVPLTGWR. A helical membrane pass occupies residues 165-185; sequence YMFGFAIIPSLIQLASIVLLP. Over 186–236 the chain is Cytoplasmic; it reads KQAEVFVIHDDDSRQADRLTEETETSNQHQQSEKYGVSDLFKSKDNMRRRT. The chain crosses the membrane as a helical span at residues 237–257; that stretch reads VIGVGLVLSQQFTGQPNVLFY. 246-247 serves as a coordination point for D-glucose; sequence QQ. Residues 258–272 are Extracellular-facing; sequence ASTILFSVGFQSNAS. Residue Asn-270 is glycosylated (N-linked (GlcNAc...) asparagine). Residues 273–293 form a helical membrane-spanning segment; the sequence is AILASVGFGIVKVIATLLAML. Residues 294–301 are Cytoplasmic-facing; sequence CSDRAGRR. A helical transmembrane segment spans residues 302–322; that stretch reads SLLIGGCSMLAVGLILTGFLC. Residues 323 to 376 are Extracellular-facing; sequence RQSVIDTTKRCTSVGPHSNLTLSAEHDEGVGFSSQTLDVHEHLRSFSQSEDIYK. A glycan (N-linked (GlcNAc...) asparagine) is linked at Asn-341. Residues 377-397 form a helical membrane-spanning segment; sequence WIIFTCLMAVVSAFSVSFGPM. Residues 398–422 are Cytoplasmic-facing; the sequence is TWVVLSEIFPKDIRGRAFSFINCFN. Trp-399 serves as a coordination point for D-glucose. 2 consecutive transmembrane segments (helical) span residues 423–443 and 444–464; these read VGAN…IGLS and GVFL…YLVL. The Cytoplasmic segment spans residues 465 to 513; the sequence is PETKGKSLQDIDRELSQTRMIHRQELCSIFQRRRFSPGYQRVQLTSTAT.

This sequence belongs to the major facilitator superfamily. Sugar transporter (TC 2.A.1.1) family. Glucose transporter subfamily.

The protein resides in the endomembrane system. Its subcellular location is the cytoplasm. It localises to the perinuclear region. The catalysed reaction is D-glucose(out) = D-glucose(in). Functionally, facilitative glucose transporter required for the development of the cardiovascular system. The sequence is that of Solute carrier family 2, facilitated glucose transporter member 10 from Danio rerio (Zebrafish).